The primary structure comprises 199 residues: SCO2-like protein RBE_0029 (199 aa).

It belongs to the SCO1/2 family.

The polypeptide is SCO2-like protein RBE_0029 (Rickettsia bellii (strain RML369-C)).